The chain runs to 1020 residues: LLGL scribble cell polarity complex component 2 (1020 aa).

14 WD repeats span residues 36-69 (SALG…FMGL), 76-117 (VTQV…IGRF), 132-169 (VTAV…ENNI), 193-227 (TLHE…VQHF), 233-264 (LESV…GEDP), 282-324 (AISK…KTHE), 332-364 (IIDF…VVDL), 386-462 (TCSH…YKLS), 506-581 (QKIH…FALV), 590-651 (TAIA…LRQS), 710-766 (VRTL…KEIQ), 775-827 (GLVV…VSSK), 832-884 (LTAV…VHYP), and 898-921 (VFTK…SLST). The disordered stretch occupies residues 935–968 (LQMRSKSPSSPVHRDLPDGVPTEHRNFKGDSEGY). Positions 946-965 (VHRDLPDGVPTEHRNFKGDS) are enriched in basic and acidic residues.

It belongs to the WD repeat L(2)GL family. Phosphorylated.

The protein localises to the cytoplasm. It is found in the cytoskeleton. Functionally, essential for hemidesmosome formation and maintenance of the cytoskeleton elements as well as cellular morphology in the basal epidermis during development. Also involved in regulating growth of the basal epidermis. The chain is LLGL scribble cell polarity complex component 2 (llgl2) from Danio rerio (Zebrafish).